The following is a 432-amino-acid chain: Glutamyl-tRNA reductase (432 aa).

Substrate-binding positions include 55–58 (TCNR), Ser114, 119–121 (ETQ), and Gln125. Residue Cys56 is the Nucleophile of the active site. Residue 194 to 199 (GAGEMI) participates in NADP(+) binding.

It belongs to the glutamyl-tRNA reductase family. As to quaternary structure, homodimer.

The catalysed reaction is (S)-4-amino-5-oxopentanoate + tRNA(Glu) + NADP(+) = L-glutamyl-tRNA(Glu) + NADPH + H(+). Its pathway is porphyrin-containing compound metabolism; protoporphyrin-IX biosynthesis; 5-aminolevulinate from L-glutamyl-tRNA(Glu): step 1/2. Its function is as follows. Catalyzes the NADPH-dependent reduction of glutamyl-tRNA(Glu) to glutamate 1-semialdehyde (GSA). The chain is Glutamyl-tRNA reductase from Burkholderia pseudomallei (strain 1710b).